Consider the following 131-residue polypeptide: Cystatin J (131 aa).

Positions 1-18 (MHLYLCVLVCLSIGMANC) are cleaved as a signal peptide. The Cystatin domain maps to 35–109 (DEILLTGVEF…RMNLPTKCSF (75 aa)). Positions 68-72 (QVVAG) match the Secondary area of contact motif. 2 disulfides stabilise this stretch: C86-C97 and C107-C128.

This sequence belongs to the cystatin family.

It localises to the secreted. The protein localises to the nematocyst. In terms of biological role, this recombinant protein inhibits the C1 cysteine protease papain (Ki is below 0.5 nM). The protein is Cystatin J of Cyanea capillata (Lion's mane jellyfish).